The chain runs to 154 residues: uncharacterized protein (154 aa).

Zn(2+) is bound by residues C4, C7, C16, C19, C24, C28, H32, and C36. Residues 4–36 (CSICNESEIKYKCPKCSFPYCSLPCWKIHQSQC) form an HIT-type zinc finger.

This is an uncharacterized protein from Schizosaccharomyces pombe (strain 972 / ATCC 24843) (Fission yeast).